A 444-amino-acid polypeptide reads, in one-letter code: Tubulin beta chain (444 aa).

Residues Gln11, Glu68, Ser137, Gly141, Thr142, Gly143, Asn203, and Asn225 each contribute to the GTP site. Glu68 contacts Mg(2+). The disordered stretch occupies residues 424-444 (QDATAEEEGEFDEDEEMDEMM). Acidic residues predominate over residues 427 to 444 (TAEEEGEFDEDEEMDEMM).

This sequence belongs to the tubulin family. Dimer of alpha and beta chains. A typical microtubule is a hollow water-filled tube with an outer diameter of 25 nm and an inner diameter of 15 nM. Alpha-beta heterodimers associate head-to-tail to form protofilaments running lengthwise along the microtubule wall with the beta-tubulin subunit facing the microtubule plus end conferring a structural polarity. Microtubules usually have 13 protofilaments but different protofilament numbers can be found in some organisms and specialized cells. Mg(2+) is required as a cofactor.

It is found in the cytoplasm. It localises to the cytoskeleton. Its function is as follows. Tubulin is the major constituent of microtubules, a cylinder consisting of laterally associated linear protofilaments composed of alpha- and beta-tubulin heterodimers. Microtubules grow by the addition of GTP-tubulin dimers to the microtubule end, where a stabilizing cap forms. Below the cap, tubulin dimers are in GDP-bound state, owing to GTPase activity of alpha-tubulin. The polypeptide is Tubulin beta chain (Achlya klebsiana).